Reading from the N-terminus, the 144-residue chain is Nucleoside diphosphate kinase (144 aa).

Lys11, Phe59, Arg87, Thr93, Arg104, and Asn114 together coordinate ATP. His117 serves as the catalytic Pros-phosphohistidine intermediate.

This sequence belongs to the NDK family. As to quaternary structure, homotetramer. Mg(2+) serves as cofactor.

Its subcellular location is the cytoplasm. The enzyme catalyses a 2'-deoxyribonucleoside 5'-diphosphate + ATP = a 2'-deoxyribonucleoside 5'-triphosphate + ADP. It carries out the reaction a ribonucleoside 5'-diphosphate + ATP = a ribonucleoside 5'-triphosphate + ADP. Major role in the synthesis of nucleoside triphosphates other than ATP. The ATP gamma phosphate is transferred to the NDP beta phosphate via a ping-pong mechanism, using a phosphorylated active-site intermediate. The polypeptide is Nucleoside diphosphate kinase (Baumannia cicadellinicola subsp. Homalodisca coagulata).